Consider the following 109-residue polypeptide: Parvalbumin, thymic (109 aa).

Ala2 is subject to N-acetylalanine. EF-hand domains are found at residues 39–74 and 78–109; these read KTPD…FSSS and LTSA…LVKA. Residues Asp52, Asp54, Ser56, Glu63, Asp91, Asp93, Asp95, Lys97, and Glu102 each contribute to the Ca(2+) site.

This sequence belongs to the parvalbumin family.

Appears to promote immune maturation in bone marrow cells in culture. Binds two calcium ions. In Gallus gallus (Chicken), this protein is Parvalbumin, thymic.